The sequence spans 216 residues: Refilin-B (216 aa).

The segment at 1–52 is disordered; it reads MVGRLSLQDVPELVDTKKKGDGVLDSPDSGLPPSPSPSHWGLAAATGGGGER. Phosphoserine occurs at positions 6 and 26.

The protein belongs to the Refilin family. Interacts with FLNA and FLNB.

It localises to the cytoplasm. The protein localises to the cytoskeleton. Functionally, involved in the regulation of the perinuclear actin network and nuclear shape through interaction with filamins. Plays an essential role in the formation of cartilaginous skeletal elements. The protein is Refilin-B of Rattus norvegicus (Rat).